A 319-amino-acid chain; its full sequence is Transcription factor jun-1 (319 aa).

2 disordered regions span residues 1 to 52 (MEED…EKES) and 216 to 264 (NGVN…CRQK). The segment covering 8–19 (PPSSSTSSESPE) has biased composition (low complexity). Basic residues predominate over residues 28–38 (PTRRRKNSKKD). A basic motif region spans residues 244-285 (KKKLERKRARNRQAATKCRQKKMDRIKELEEQVLHEKHRGQR). The bZIP domain maps to 244 to 307 (KKKLERKRAR…EHFRRTVEHH (64 aa)). The tract at residues 286-293 (LDAELLEL) is leucine-zipper.

Belongs to the bZIP family. Jun subfamily. As to quaternary structure, heterodimer; with fos-1. Isoform a, isoform b, isoform c and isoform d are expressed in the spermatheca.

Its subcellular location is the nucleus. Its function is as follows. Transcription factor that recognizes and binds to the AP-1 non-canonical enhancer heptamer motif 5'-TTAGTCA-3'. Required for ovulation. Controls plc-1 expression in the spermatheca to regulate spermathecal valve dilation. The chain is Transcription factor jun-1 from Caenorhabditis elegans.